We begin with the raw amino-acid sequence, 295 residues long: sn-glycerol-3-phosphate transport system permease protein UgpA (295 aa).

Topologically, residues 1–11 (MSSSRPVFRSR) are cytoplasmic. A helical membrane pass occupies residues 12 to 32 (WLPYLLVAPQLIITVIFFIWP). Residues 33–80 (AGEALWYSLQSVDPFGFSSQFVGLDNFVTLFHDSYYLDAFWTTIKFST) are Periplasmic-facing. The ABC transmembrane type-1 domain occupies 76–284 (IKFSTFVTVS…FLVIVLTVVQ (209 aa)). The chain crosses the membrane as a helical span at residues 81-101 (FVTVSGLLVSLFFAALVEYIV). Topologically, residues 102 to 109 (RGSRFYQT) are cytoplasmic. A helical membrane pass occupies residues 110-130 (LMLLPYAVAPAVAAVLWIFLF). Residues 131 to 156 (NPGRGLITHFLAEFGYDWNHAQNSGQ) lie on the Periplasmic side of the membrane. A helical transmembrane segment spans residues 157 to 177 (AMFLVVFASVWKQISYNFLFF). The Cytoplasmic portion of the chain corresponds to 178 to 207 (YAALQSIPRSLIEAAAIDGAGPIRRFFKIA). The helical transmembrane segment at 208–228 (LPLIAPVSFFLLVVNLVYAFF) threads the bilayer. Residues 229-262 (DTFPVIDAATSGGPVQATTTLIYKIYREGFTGLD) are Periplasmic-facing. The helical transmembrane segment at 263 to 283 (LASSAAQSVVLMFLVIVLTVV) threads the bilayer. At 284–295 (QFRYVESKVRYQ) the chain is on the cytoplasmic side.

Belongs to the binding-protein-dependent transport system permease family. UgpAE subfamily. The complex is composed of two ATP-binding proteins (UgpC), two transmembrane proteins (UgpA and UgpE) and a solute-binding protein (UgpB).

The protein resides in the cell inner membrane. Part of the ABC transporter complex UgpBAEC involved in sn-glycerol-3-phosphate (G3P) import. Probably responsible for the translocation of the substrate across the membrane. The sequence is that of sn-glycerol-3-phosphate transport system permease protein UgpA (ugpA) from Escherichia coli (strain UTI89 / UPEC).